We begin with the raw amino-acid sequence, 366 residues long: Histone-lysine N-methyltransferase SETD7 (366 aa).

MORN repeat units follow at residues 36–58 (FEGHFVHGEKNGRGKFYFFDGST), 59–81 (LEGFYVDDALQGQGIYTYEDGGS), and 106–128 (FKGQYKDNVRHGVCWIYYPDGGS). Residues 214–336 (ERVYVNDSLI…KDEELTVAYG (123 aa)) enclose the SET domain. S-adenosyl-L-methionine is bound by residues 226–228 (AGE), asparagine 296, and histidine 297.

Belongs to the class V-like SAM-binding methyltransferase superfamily. Histone-lysine methyltransferase family. SET7 subfamily.

It is found in the nucleus. Its subcellular location is the chromosome. The enzyme catalyses L-lysyl(4)-[histone H3] + S-adenosyl-L-methionine = N(6)-methyl-L-lysyl(4)-[histone H3] + S-adenosyl-L-homocysteine + H(+). It carries out the reaction L-lysyl-[protein] + S-adenosyl-L-methionine = N(6)-methyl-L-lysyl-[protein] + S-adenosyl-L-homocysteine + H(+). In terms of biological role, histone methyltransferase that specifically monomethylates 'Lys-4' of histone H3. H3 'Lys-4' methylation represents a specific tag for epigenetic transcriptional activation. Plays a central role in the transcriptional activation of genes. Also has methyltransferase activity toward non-histone proteins. This is Histone-lysine N-methyltransferase SETD7 (setd7) from Xenopus tropicalis (Western clawed frog).